Here is a 245-residue protein sequence, read N- to C-terminus: MKQVDLNADLAEGCGSDEALLQLITSANIACAQHAGSIADIRAALAYAQQNGVRIGAHPGYPDRENFGRTEMNLSEADLRACLNYQLGALQALCRDQGLEMAYVKPHGAMYNQAAKNRALADTVARIVADFDPKLKLMALSGSLLLEAGKAAGLGVISEVFADRRYMPDGTLVPRSRPDAQVDSDEEAIAQVLQMVRDGRVKAVNGSLVAVQADSICLHGDGPHAVVFAEKIRQELLAAGIKVSA.

This sequence belongs to the LamB/PxpA family. As to quaternary structure, forms a complex composed of PxpA, PxpB and PxpC.

The enzyme catalyses 5-oxo-L-proline + ATP + 2 H2O = L-glutamate + ADP + phosphate + H(+). Functionally, catalyzes the cleavage of 5-oxoproline to form L-glutamate coupled to the hydrolysis of ATP to ADP and inorganic phosphate. In Neisseria meningitidis serogroup C (strain 053442), this protein is 5-oxoprolinase subunit A.